We begin with the raw amino-acid sequence, 156 residues long: Small ribosomal subunit protein uS7 (156 aa).

It belongs to the universal ribosomal protein uS7 family. Part of the 30S ribosomal subunit. Contacts proteins S9 and S11.

In terms of biological role, one of the primary rRNA binding proteins, it binds directly to 16S rRNA where it nucleates assembly of the head domain of the 30S subunit. Is located at the subunit interface close to the decoding center, probably blocks exit of the E-site tRNA. The polypeptide is Small ribosomal subunit protein uS7 (Shewanella baltica (strain OS223)).